A 350-amino-acid polypeptide reads, in one-letter code: Ion-translocating oxidoreductase complex subunit D (350 aa).

The next 3 membrane-spanning stretches (helical) occupy residues 20-39 (IMML…WYFF), 89-109 (IPPL…VIIA), and 123-143 (PAMI…TNWL). Thr-187 bears the FMN phosphoryl threonine mark. The next 5 helical transmembrane spans lie at 215 to 235 (LAGL…LFLL), 244 to 264 (IPVS…LIAP), 267 to 287 (FLSP…FFIL), 301 to 321 (LVFG…GGYP), and 322 to 342 (DGVA…DYYT).

This sequence belongs to the NqrB/RnfD family. As to quaternary structure, the complex is composed of six subunits: RnfA, RnfB, RnfC, RnfD, RnfE and RnfG. FMN is required as a cofactor.

Its subcellular location is the cell inner membrane. Functionally, part of a membrane-bound complex that couples electron transfer with translocation of ions across the membrane. The polypeptide is Ion-translocating oxidoreductase complex subunit D (Cronobacter sakazakii (strain ATCC BAA-894) (Enterobacter sakazakii)).